Here is a 77-residue protein sequence, read N- to C-terminus: Conotoxin ArMSGL-0143 (77 aa).

The signal sequence occupies residues 1–22 (MSGLGIMLLTLLLLVFMETSHQ). A propeptide spanning residues 23-44 (DAGEKQATQRDAINVRRRRSLT) is cleaved from the precursor. Intrachain disulfides connect cysteine 51–cysteine 63, cysteine 55–cysteine 71, and cysteine 62–cysteine 75. Phenylalanine 76 is subject to Phenylalanine amide.

The protein belongs to the conotoxin O3 superfamily. In terms of tissue distribution, expressed by the venom duct.

It localises to the secreted. The polypeptide is Conotoxin ArMSGL-0143 (Conus arenatus (Sand-dusted cone)).